The chain runs to 799 residues: MPSQNYDLPQKKQEKMTKFQEAVTFKDVAVVFSREELRLLDLTQRKLYRDVMVENFKNLVAVGHLPFQPDMVSQLEAEEKLWMMETETQRSSKHQNKMETLQKFALKYLSNQELSCWQIWKQVASELTRCLQGKSSQLLQGDSIQVSENENNIMNPKGDSSIYIENQEFPFWRTQHSCGNTYLSESQIQSRGKQIDVKNNLQIHEDFMKKSPFHEHIKTDTEPKPCKGNEYGKIISDGSNQKLPLGEKPHPCGECGRGFSYSPRLPLHPNVHTGEKCFSQSSHLRTHQRIHPGEKLNRCHESGDCFNKSSFHSYQSNHTGEKSYRCDSCGKGFSSSTGLIIHYRTHTGEKPYKCEECGKCFSQSSNFQCHQRVHTEEKPYKCEECGKGFGWSVNLRVHQRVHRGEKPYKCEECGKGFTQAAHFHIHQRVHTGEKPYKCDVCGKGFSHNSPLICHRRVHTGEKPYKCEACGKGFTRNTDLHIHFRVHTGEKPYKCKECGKGFSQASNLQVHQNVHTGEKRFKCETCGKGFSQSSKLQTHQRVHTGEKPYRCDVCGKDFSYSSNLKLHQVIHTGEKPYKCEECGKGFSWRSNLHAHQRVHSGEKPYKCEQCDKSFSQAIDFRVHQRVHTGEKPYKCGVCGKGFSQSSGLQSHQRVHTGEKPYKCDVCGKGFRYSSQFIYHQRGHTGEKPYKCEECGKGFGRSLNLRHHQRVHTGEKPHICEECGKAFSLPSNLRVHLGVHTREKLFKCEECGKGFSQSARLEAHQRVHTGEKPYKCDICDKDFRHRSRLTYHQKVHTGKKL.

A KRAB domain is found at 23 to 94; sequence VTFKDVAVVF…ETETQRSSKH (72 aa). 19 consecutive C2H2-type zinc fingers follow at residues 250-272, 269-291, 324-346, 352-374, 380-402, 408-430, 436-458, 464-486, 492-514, 520-542, 548-570, 576-598, 604-626, 632-654, 660-682, 688-710, 716-738, 744-766, and 772-794; these read HPCGECGRGFSYSPRLPLHPNVH, PNVHTGEKCFSQSSHLRTHQRIH, YRCDSCGKGFSSSTGLIIHYRTH, YKCEECGKCFSQSSNFQCHQRVH, YKCEECGKGFGWSVNLRVHQRVH, YKCEECGKGFTQAAHFHIHQRVH, YKCDVCGKGFSHNSPLICHRRVH, YKCEACGKGFTRNTDLHIHFRVH, YKCKECGKGFSQASNLQVHQNVH, FKCETCGKGFSQSSKLQTHQRVH, YRCDVCGKDFSYSSNLKLHQVIH, YKCEECGKGFSWRSNLHAHQRVH, YKCEQCDKSFSQAIDFRVHQRVH, YKCGVCGKGFSQSSGLQSHQRVH, YKCDVCGKGFRYSSQFIYHQRGH, YKCEECGKGFGRSLNLRHHQRVH, HICEECGKAFSLPSNLRVHLGVH, FKCEECGKGFSQSARLEAHQRVH, and YKCDICDKDFRHRSRLTYHQKVH.

This sequence belongs to the krueppel C2H2-type zinc-finger protein family.

The protein resides in the nucleus. Functionally, may be involved in transcriptional regulation. In Homo sapiens (Human), this protein is Zinc finger protein 227 (ZNF227).